Here is a 1649-residue protein sequence, read N- to C-terminus: PHD and RING finger domain-containing protein 1 (1649 aa).

Positions 1-79 are disordered; that stretch reads MDDDSLDELV…RSGSEDSEDD (79 aa). At serine 5 the chain carries Phosphoserine. The segment covering 54–79 has biased composition (acidic residues); that stretch reads TDGEDEGASEEEDLEDRSGSEDSEDD. Residues 108 to 149 form an RING-type; degenerate zinc finger; that stretch reads CPICLNAFRDQAVGTPENCAHYFCLDCIVEWSKNANSCPVDR. Residues 183 to 233 form a PHD-type zinc finger; it reads PTFCEVCGRSDREDRLLLCDGCDAGYHMECLDPPLQEVPVDEWFCPECAAP. The tract at residues 324-398 is disordered; that stretch reads VYQRPLTPRT…TRSRIARTLG (75 aa). Threonine 330 is subject to Phosphothreonine. Basic residues predominate over residues 334–353; the sequence is PARRKRKTRRRKKVPGRKKT. Residues 354-366 show a composition bias toward low complexity; sequence PSGPSAKSKSSAT. Residues 367 to 382 are compositionally biased toward basic residues; sequence RSKKRQHRVKKRRGKK. Residues serine 445 and serine 455 each carry the phosphoserine modification. Disordered regions lie at residues 534 to 600, 644 to 871, 888 to 1240, and 1281 to 1395; these read KRAA…GAPV, SAAS…PKAQ, FGTE…KAPL, and IQLD…PLLR. Positions 568 to 589 are enriched in polar residues; sequence SPAQGPSGNRPQSTGLSCQGRS. 2 stretches are compositionally biased toward basic and acidic residues: residues 685–697 and 727–742; these read IRRD…RDAA and TRAE…REPG. Residues 786–796 are compositionally biased toward polar residues; the sequence is AHSSQLSSPGF. The span at 802–812 shows a compositional bias: basic and acidic residues; it reads PVDDKEQRKEN. A phosphoserine mark is found at serine 814, serine 845, serine 846, serine 864, serine 867, and serine 915. Polar residues-rich tracts occupy residues 835–848 and 859–871; these read PTGS…SSPE and ITRT…PKAQ. Threonine 917 carries the phosphothreonine modification. Phosphoserine occurs at positions 936, 973, and 991. The segment covering 988 to 999 has biased composition (low complexity); that stretch reads RPPSRSRSTSSS. Over residues 1000 to 1011 the composition is skewed to basic residues; the sequence is RSRKKAKRKRVS. Positions 1012 to 1030 are enriched in basic and acidic residues; that stretch reads REHGRTRSGTRSESRDRSS. Residues 1043-1053 show a composition bias toward basic residues; it reads RRQRSKAKSRR. A compositionally biased stretch (basic and acidic residues) spans 1054–1063; that stretch reads SSSDRSSSRE. A compositionally biased stretch (basic residues) spans 1064–1090; the sequence is RAKRKKAKDKSREHRRGPWGHSRRTSR. Residues 1091-1101 show a composition bias toward low complexity; sequence SRSGSPGSSSY. Over residues 1106–1118 the composition is skewed to basic residues; the sequence is SRKKKKRRSASRP. 2 positions are modified to phosphoserine: serine 1124 and serine 1128. Basic and acidic residues-rich tracts occupy residues 1141-1151 and 1181-1198; these read RSHERPDRKES and REKW…KGAV. 2 positions are modified to phosphoserine: serine 1202 and serine 1229. The span at 1284–1297 shows a compositional bias: low complexity; it reads DDMSSPPSPESTDS. Residues 1345-1356 are compositionally biased toward basic and acidic residues; that stretch reads HLLRPDAAEKAE. Residues serine 1359, serine 1360, and serine 1371 each carry the phosphoserine modification. A Phosphothreonine modification is found at threonine 1404. 4 disordered regions span residues 1407–1439, 1455–1486, 1526–1556, and 1630–1649; these read LQES…WDME, FPSH…AQPS, TPAS…EKTK, and MRRH…GAEG. Residues 1531–1540 show a composition bias toward polar residues; the sequence is PASQATAASN. Residues 1541–1556 show a composition bias toward basic and acidic residues; it reads SEEKTPAPRLAAEKTK. Positions 1549–1579 form a coiled coil; the sequence is RLAAEKTKKEEYMKKLHMQERAVEEVKLAIK.

As to quaternary structure, interacts with POLR2A (via the C-terminal domain).

The polypeptide is PHD and RING finger domain-containing protein 1 (PHRF1) (Homo sapiens (Human)).